The chain runs to 444 residues: MTLDLSKPATAGYLSGFANEFATEALPGALPHGRNSPQRAPYGLYAEQLSGTAFTAPRGHNRRSWLYRIRPAAVHRPFEPFTGPQRLVSEFGDSADVPPTPPNQLRWDPLPMPVEPTDFVEGLVTMAGNGSAAAMNGCAIHLYAANRSMQDRFFYSADGELLIVPQQGRLFIATEFGRLDVEPFEIAVIPRGVRFSVALPDGDARGYICENFGALLRLPDLGPIGSNGLANPRDFLTPQAAYEDREGAFELVAKLNGRLWRADIGHSPFDVVAWHGNYAPYKYDLRLFNTIGSISFDHPDPSIFLVLQSQSDTPGVDAIDFVIFPPRWLAAEDTFRPPWFHRNVASEFMGLVHGAYDAKAEGFVPGGASLHNCMSGHGPDADTFEKASASDTTKPHKVDATMAFMFETRTLIRPTRYALDTAQLQPDYFECWQGIRKHFNPEQP.

The active-site Proton acceptor is His298. Positions 341 and 347 each coordinate Fe cation. Homogentisate-binding residues include Tyr356 and His377. His377 is a binding site for Fe cation.

It belongs to the homogentisate dioxygenase family. As to quaternary structure, hexamer; dimer of trimers. It depends on Fe cation as a cofactor.

The enzyme catalyses homogentisate + O2 = 4-maleylacetoacetate + H(+). It functions in the pathway amino-acid degradation; L-phenylalanine degradation; acetoacetate and fumarate from L-phenylalanine: step 4/6. Its function is as follows. Involved in the catabolism of homogentisate (2,5-dihydroxyphenylacetate or 2,5-OH-PhAc), a central intermediate in the degradation of phenylalanine and tyrosine. Catalyzes the oxidative ring cleavage of the aromatic ring of homogentisate to yield maleylacetoacetate. This Burkholderia ambifaria (strain ATCC BAA-244 / DSM 16087 / CCUG 44356 / LMG 19182 / AMMD) (Burkholderia cepacia (strain AMMD)) protein is Homogentisate 1,2-dioxygenase.